The chain runs to 368 residues: Glycoprotein UL18 (368 aa).

The first 18 residues, 1–18 (MMTMWCLTLFVLWMLRVV), serve as a signal peptide directing secretion. Residues 19-114 (GMHVLRYGYT…EIALGYRSQS (96 aa)) form an alpha-1-like region. N-linked (GlcNAc...) asparagine; by host glycosylation is found at Asn-56, Asn-66, Asn-74, Asn-95, Asn-123, Asn-127, Asn-150, Asn-167, Asn-177, Asn-193, Asn-240, Asn-282, and Asn-291. The segment at 115–208 (VLTWTHECNT…VIYSGFQPPV (94 aa)) is alpha-2-like. The interval 209–303 (THPVVKGGVR…VEIPISVTSP (95 aa)) is alpha-3-like. The helical transmembrane segment at 321–342 (YNTMTISSVLLALLLCALLFAF) threads the bilayer.

In terms of assembly, interacts with host LILRB1.

The protein localises to the host membrane. Functionally, plays a role in the protection against host NK cell cytotoxicity by interacting with and modulating the activity of the host inhibitory leukocyte Ig-like receptor 1/LILRB1, which is expressed on monocytes, dendritic cells, as well as subsets of T and NK cells. UL18 exerts an inhibitory effect on LIR-1+ NK cells, while it stimulates LIR-1- NK cell. These modulations prevent lysis of the infected cells by NK cells. This Homo sapiens (Human) protein is Glycoprotein UL18 (H301).